A 459-amino-acid polypeptide reads, in one-letter code: uncharacterized protein (459 aa).

Residues 13–145 (TESAIKRVVG…DALSKGRELK (133 aa)) form the B12-binding domain. The region spanning 188–402 (ADGVPFGVVM…MNWRKYTTID (215 aa)) is the Radical SAM core domain. 3 residues coordinate [4Fe-4S] cluster: C202, C206, and C209.

This sequence belongs to the methyltransferase superfamily. [4Fe-4S] cluster serves as cofactor.

This is an uncharacterized protein from Pyrococcus horikoshii (strain ATCC 700860 / DSM 12428 / JCM 9974 / NBRC 100139 / OT-3).